The following is a 329-amino-acid chain: Ubiquitin carboxyl-terminal hydrolase isozyme L5 (329 aa).

The 219-residue stretch at 7–225 (EWCLMESDPG…IRFNLMAIVS (219 aa)) folds into the UCH catalytic domain. Position 47 is an N6-succinyllysine (K47). C88 functions as the Nucleophile in the catalytic mechanism. K158 carries the N6-acetyllysine modification. H164 functions as the Proton donor in the catalytic mechanism. K289 carries the N6-succinyllysine modification. Residues 291–319 (NYLPFIMELLKTLAEHQQLIPLVEKAKEK) form the ULD domain. Positions 313 to 329 (VEKAKEKQNAKKAQETK) are interaction with ADRM1.

The protein belongs to the peptidase C12 family. As to quaternary structure, component of the 19S (PA700) regulatory complex of the 26S proteasome. Interacts with ADRM1 and NFRKB. Component of the INO80 complex; specifically part of a complex module associated with N-terminus of INO80.

The protein localises to the cytoplasm. The protein resides in the nucleus. It catalyses the reaction Thiol-dependent hydrolysis of ester, thioester, amide, peptide and isopeptide bonds formed by the C-terminal Gly of ubiquitin (a 76-residue protein attached to proteins as an intracellular targeting signal).. Its activity is regulated as follows. Activated by ADRM1. Inhibited by interaction with NFRKB. Functionally, protease that specifically cleaves 'Lys-48'-linked polyubiquitin chains. Deubiquitinating enzyme associated with the 19S regulatory subunit of the 26S proteasome. Putative regulatory component of the INO80 complex; however is inactive in the INO80 complex and is activated by a transient interaction of the INO80 complex with the proteasome via ADRM1. In Mus musculus (Mouse), this protein is Ubiquitin carboxyl-terminal hydrolase isozyme L5 (Uchl5).